We begin with the raw amino-acid sequence, 375 residues long: Probable dipeptidase PepE (375 aa).

Transmembrane regions (helical) follow at residues L15 to G35 and L55 to L75. D230, D242, H306, E335, and E349 together coordinate Mn(2+).

The protein belongs to the peptidase M24B family. Requires Mn(2+) as cofactor.

The protein resides in the cell membrane. The sequence is that of Probable dipeptidase PepE (pepE) from Mycobacterium bovis (strain ATCC BAA-935 / AF2122/97).